Consider the following 271-residue polypeptide: Protein FAM110D (271 aa).

Disordered stretches follow at residues 1–83 (MLLA…RPDS), 116–145 (PRDA…APEA), and 186–245 (PQSW…PVSV). A compositionally biased stretch (basic residues) spans 68–78 (RPVRRGSGRRL). Positions 116–126 (PRDAAPSSPAS) are enriched in low complexity. Residues 220–231 (SPGGAGGGGGSE) show a composition bias toward gly residues.

It belongs to the FAM110 family.

The protein is Protein FAM110D (FAM110D) of Homo sapiens (Human).